Reading from the N-terminus, the 292-residue chain is Shikimate dehydrogenase (NADP(+)) (292 aa).

Shikimate is bound by residues 22-24 (SLS) and Ser69. Lys73 (proton acceptor) is an active-site residue. The shikimate site is built by Asn94 and Asp111. NADP(+) is bound by residues 135–139 (GVGGA) and Ile236. Position 238 (Tyr238) interacts with shikimate. An NADP(+)-binding site is contributed by Gly260.

The protein belongs to the shikimate dehydrogenase family. As to quaternary structure, homodimer.

The enzyme catalyses shikimate + NADP(+) = 3-dehydroshikimate + NADPH + H(+). It participates in metabolic intermediate biosynthesis; chorismate biosynthesis; chorismate from D-erythrose 4-phosphate and phosphoenolpyruvate: step 4/7. In terms of biological role, involved in the biosynthesis of the chorismate, which leads to the biosynthesis of aromatic amino acids. Catalyzes the reversible NADPH linked reduction of 3-dehydroshikimate (DHSA) to yield shikimate (SA). This chain is Shikimate dehydrogenase (NADP(+)), found in Streptococcus pyogenes serotype M2 (strain MGAS10270).